Here is a 285-residue protein sequence, read N- to C-terminus: Bifunctional protein FolD (285 aa).

NADP(+)-binding positions include 164-166, Ser193, and Ile234; that span reads GRS.

Belongs to the tetrahydrofolate dehydrogenase/cyclohydrolase family. In terms of assembly, homodimer.

The enzyme catalyses (6R)-5,10-methylene-5,6,7,8-tetrahydrofolate + NADP(+) = (6R)-5,10-methenyltetrahydrofolate + NADPH. It carries out the reaction (6R)-5,10-methenyltetrahydrofolate + H2O = (6R)-10-formyltetrahydrofolate + H(+). The protein operates within one-carbon metabolism; tetrahydrofolate interconversion. Catalyzes the oxidation of 5,10-methylenetetrahydrofolate to 5,10-methenyltetrahydrofolate and then the hydrolysis of 5,10-methenyltetrahydrofolate to 10-formyltetrahydrofolate. This is Bifunctional protein FolD from Desulfovibrio desulfuricans (strain ATCC 27774 / DSM 6949 / MB).